The primary structure comprises 480 residues: Molybdate-anion transporter (480 aa).

The next 12 helical transmembrane spans lie at 1 to 21 (MFVTAYFAVISLLALCVGLEL), 44 to 63 (ATFLRAYLLALWADWLQGPY), 78 to 98 (IAILYVCGLASCVLFAPFSGW), 129 to 149 (FVLIVGRILGGLSTSLLTTTF), 177 to 197 (TWNHGLAVGAGLVANLLAEWL), 199 to 219 (LGPVAPFLLAVPFLACCAWFV), 274 to 294 (VMLLGGVQALFESVLYIFIFL), 304 to 324 (SPLGIVFSCFMAASMVGSLLF), 339 to 359 (VLCVAVLMAFFSFFMLTFSTV), 369 to 389 (FLAFLLLELACGLYFPALNFL), 401 to 421 (SVLAWFRLPLHLLACLGLLAL), and 441 to 461 (FGGCAVMMLAALMAVVSLFTL).

It belongs to the major facilitator superfamily.

It localises to the cell membrane. Mediates high-affinity intracellular uptake of the rare oligo-element molybdenum. This Takifugu rubripes (Japanese pufferfish) protein is Molybdate-anion transporter (mfsd5).